The primary structure comprises 261 residues: tRNA U34 carboxymethyltransferase (261 aa).

Carboxy-S-adenosyl-L-methionine contacts are provided by residues K25, W39, K44, G63, 114 to 115 (VE), Y135, and R250.

The protein belongs to the class I-like SAM-binding methyltransferase superfamily. CmoB family. Homotetramer.

The catalysed reaction is carboxy-S-adenosyl-L-methionine + 5-hydroxyuridine(34) in tRNA = 5-carboxymethoxyuridine(34) in tRNA + S-adenosyl-L-homocysteine + H(+). Catalyzes carboxymethyl transfer from carboxy-S-adenosyl-L-methionine (Cx-SAM) to 5-hydroxyuridine (ho5U) to form 5-carboxymethoxyuridine (cmo5U) at position 34 in tRNAs. The chain is tRNA U34 carboxymethyltransferase from Helicobacter pylori (strain Shi470).